The chain runs to 289 residues: NAD kinase (289 aa).

D82 functions as the Proton acceptor in the catalytic mechanism. NAD(+) is bound by residues 82 to 83, R87, 150 to 151, K161, R178, D180, 191 to 196, A215, and Q250; these read DG, NE, and TAYAMS.

This sequence belongs to the NAD kinase family. It depends on a divalent metal cation as a cofactor.

The protein resides in the cytoplasm. It carries out the reaction NAD(+) + ATP = ADP + NADP(+) + H(+). Its function is as follows. Involved in the regulation of the intracellular balance of NAD and NADP, and is a key enzyme in the biosynthesis of NADP. Catalyzes specifically the phosphorylation on 2'-hydroxyl of the adenosine moiety of NAD to yield NADP. The chain is NAD kinase from Methanosarcina mazei (strain ATCC BAA-159 / DSM 3647 / Goe1 / Go1 / JCM 11833 / OCM 88) (Methanosarcina frisia).